The following is a 299-amino-acid chain: ATP phosphoribosyltransferase (299 aa).

It belongs to the ATP phosphoribosyltransferase family. Long subfamily. In terms of assembly, equilibrium between an active dimeric form, an inactive hexameric form and higher aggregates. Interconversion between the various forms is largely reversible and is influenced by the natural substrates and inhibitors of the enzyme. Mg(2+) serves as cofactor.

The protein localises to the cytoplasm. It carries out the reaction 1-(5-phospho-beta-D-ribosyl)-ATP + diphosphate = 5-phospho-alpha-D-ribose 1-diphosphate + ATP. Its pathway is amino-acid biosynthesis; L-histidine biosynthesis; L-histidine from 5-phospho-alpha-D-ribose 1-diphosphate: step 1/9. With respect to regulation, feedback inhibited by histidine. Functionally, catalyzes the condensation of ATP and 5-phosphoribose 1-diphosphate to form N'-(5'-phosphoribosyl)-ATP (PR-ATP). Has a crucial role in the pathway because the rate of histidine biosynthesis seems to be controlled primarily by regulation of HisG enzymatic activity. This Buchnera aphidicola subsp. Diuraphis noxia protein is ATP phosphoribosyltransferase.